The following is a 634-amino-acid chain: Chaperone protein HtpG (634 aa).

Residues 1–345 (MEHQQNHTFS…SNDLPLNVSR (345 aa)) are a; substrate-binding. The segment at 346–562 (EILQDTRVTA…NDDMSTQMAK (217 aa)) is b. The segment at 563 to 634 (LMAQMGQPVP…VGRINKLLLA (72 aa)) is c.

Belongs to the heat shock protein 90 family. In terms of assembly, homodimer.

It localises to the cytoplasm. In terms of biological role, molecular chaperone. Has ATPase activity. The polypeptide is Chaperone protein HtpG (Psychromonas ingrahamii (strain DSM 17664 / CCUG 51855 / 37)).